Reading from the N-terminus, the 38-residue chain is Large ribosomal subunit protein bL36 (38 aa).

This sequence belongs to the bacterial ribosomal protein bL36 family.

The sequence is that of Large ribosomal subunit protein bL36 from Chlorobium limicola (strain DSM 245 / NBRC 103803 / 6330).